The primary structure comprises 199 residues: Probable chemoreceptor glutamine deamidase CheD (199 aa).

It belongs to the CheD family.

The enzyme catalyses L-glutaminyl-[protein] + H2O = L-glutamyl-[protein] + NH4(+). Functionally, probably deamidates glutamine residues to glutamate on methyl-accepting chemotaxis receptors (MCPs), playing an important role in chemotaxis. The chain is Probable chemoreceptor glutamine deamidase CheD from Cereibacter sphaeroides (strain ATCC 17023 / DSM 158 / JCM 6121 / CCUG 31486 / LMG 2827 / NBRC 12203 / NCIMB 8253 / ATH 2.4.1.) (Rhodobacter sphaeroides).